Reading from the N-terminus, the 451-residue chain is Phosphoglucosamine mutase (451 aa).

The active-site Phosphoserine intermediate is the serine 101. Residues serine 101, aspartate 240, aspartate 242, and aspartate 244 each coordinate Mg(2+). Phosphoserine is present on serine 101.

This sequence belongs to the phosphohexose mutase family. It depends on Mg(2+) as a cofactor. Post-translationally, activated by phosphorylation.

The enzyme catalyses alpha-D-glucosamine 1-phosphate = D-glucosamine 6-phosphate. In terms of biological role, catalyzes the conversion of glucosamine-6-phosphate to glucosamine-1-phosphate. In Streptococcus pyogenes serotype M1, this protein is Phosphoglucosamine mutase.